Here is a 317-residue protein sequence, read N- to C-terminus: Serine/threonine-protein phosphatase PP1 isozyme 1 (317 aa).

Mn(2+) contacts are provided by Asp-75, His-77, Asp-103, and Asn-135. His-136 functions as the Proton donor in the catalytic mechanism. Positions 184 and 259 each coordinate Mn(2+).

The protein belongs to the PPP phosphatase family. PP-1 subfamily. Mn(2+) serves as cofactor.

It catalyses the reaction O-phospho-L-seryl-[protein] + H2O = L-seryl-[protein] + phosphate. It carries out the reaction O-phospho-L-threonyl-[protein] + H2O = L-threonyl-[protein] + phosphate. This chain is Serine/threonine-protein phosphatase PP1 isozyme 1 (NPP1), found in Nicotiana tabacum (Common tobacco).